The primary structure comprises 262 residues: Tryptophan synthase alpha chain (262 aa).

Residues Glu48 and Asp59 each act as proton acceptor in the active site.

The protein belongs to the TrpA family. As to quaternary structure, tetramer of two alpha and two beta chains.

The enzyme catalyses (1S,2R)-1-C-(indol-3-yl)glycerol 3-phosphate + L-serine = D-glyceraldehyde 3-phosphate + L-tryptophan + H2O. It functions in the pathway amino-acid biosynthesis; L-tryptophan biosynthesis; L-tryptophan from chorismate: step 5/5. Its function is as follows. The alpha subunit is responsible for the aldol cleavage of indoleglycerol phosphate to indole and glyceraldehyde 3-phosphate. The chain is Tryptophan synthase alpha chain from Helicobacter pylori (strain G27).